The chain runs to 570 residues: Protein mom-5 (570 aa).

The signal sequence occupies residues methionine 1–alanine 16. Residues aspartate 17–arginine 230 lie on the Extracellular side of the membrane. In terms of domain architecture, FZ spans serine 32 to lysine 148. 5 disulfides stabilise this stretch: cysteine 37-cysteine 98, cysteine 45-cysteine 91, cysteine 82-cysteine 119, cysteine 108-cysteine 145, and cysteine 112-cysteine 136. N-linked (GlcNAc...) asparagine glycosylation occurs at asparagine 51. An N-linked (GlcNAc...) asparagine glycan is attached at asparagine 149. The helical transmembrane segment at isoleucine 231–phenylalanine 251 threads the bilayer. The Cytoplasmic segment spans residues leucine 252–proline 264. A helical membrane pass occupies residues isoleucine 265–glycine 285. The Extracellular portion of the chain corresponds to glutamate 286–tyrosine 319. Residues phenylalanine 320 to alanine 340 traverse the membrane as a helical segment. The Cytoplasmic segment spans residues asparagine 341–serine 348. A helical membrane pass occupies residues isoleucine 349–valine 369. Topologically, residues threonine 370 to alanine 395 are extracellular. A helical membrane pass occupies residues leucine 396–valine 416. Residues cysteine 417 to arginine 449 are Cytoplasmic-facing. A helical transmembrane segment spans residues isoleucine 450 to tyrosine 470. The Extracellular segment spans residues glutamine 471 to glutamate 515. A helical membrane pass occupies residues isoleucine 516–tryptophan 536. Over valine 537–arginine 570 the chain is Cytoplasmic.

Belongs to the G-protein coupled receptor Fz/Smo family.

Its subcellular location is the cell membrane. The protein resides in the early endosome. In terms of biological role, receptor for Wnt proteins. Most frizzled receptors are coupled to the beta-catenin canonical signaling pathway, which leads to the activation of disheveled proteins, inhibition of gsk-3 kinase, nuclear accumulation of beta-catenin and activation of Wnt target genes. A second signaling pathway involving PKC and calcium fluxes has been seen for some family members, but it is not yet clear if it represents a distinct pathway or if it can be integrated in the canonical pathway, as pkc seems to be required for Wnt-mediated inactivation of gsk-3 kinase. Both pathways seem to involve interactions with G-proteins. Required in embryonic development for the correct positioning and orientation of the mitotic spindles and division planes in blastomere cells. During early embryonic cell divisions, directs the asymmetric positioning of transcription factors such as pop-1 and dsh-2 in daughter cells in order to determine cell fate specification. Acts redundantly with other Wnt receptors such as lin-17 to control vulval precursor cell specification and also the polarity of different cell types including distal tip cells, seam cells, AVG interneurons and P-cells and their descendants. Plays a role in the migration of cell types including distal tip cells and the QR neuroblast descendants, QR.p and QR.pa during larval development. Negatively regulates the unc-6/Netrin receptors unc-5 and unc-40 to control distal tip cell polarity and migration. Acts through ced-5/DOCK180 and ced-10/Rac to control both distal tip cell migration and the phagocytic clearance of apoptotic cell corpses. Furthermore, it is also required for the migration and axon guidance of the different neuronal cell types including CAN, ALM, HSN and the two mechanosensory neurons AVM and PVM. Mediates Wnt receptor cfz-2 in directing ALM migration, but may also act redundantly with the Wnt receptors cfz-2 and mig-1 to direct the migration of other neuronal cell types including CAN and HSN. Mediates Wnt ligand egl-20 in the control of the anterior-posterior axon guidance of AVM and PVM neurons. This chain is Protein mom-5, found in Caenorhabditis elegans.